Reading from the N-terminus, the 91-residue chain is CRISPR-associated endoribonuclease Cas2 2 (91 aa).

Asp-8 lines the Mg(2+) pocket.

This sequence belongs to the CRISPR-associated endoribonuclease Cas2 protein family. Homodimer, forms a heterotetramer with a Cas1 homodimer. Requires Mg(2+) as cofactor.

Its function is as follows. CRISPR (clustered regularly interspaced short palindromic repeat), is an adaptive immune system that provides protection against mobile genetic elements (viruses, transposable elements and conjugative plasmids). CRISPR clusters contain sequences complementary to antecedent mobile elements and target invading nucleic acids. CRISPR clusters are transcribed and processed into CRISPR RNA (crRNA). Functions as a ssRNA-specific endoribonuclease. Involved in the integration of spacer DNA into the CRISPR cassette. In Pyrobaculum aerophilum (strain ATCC 51768 / DSM 7523 / JCM 9630 / CIP 104966 / NBRC 100827 / IM2), this protein is CRISPR-associated endoribonuclease Cas2 2.